Reading from the N-terminus, the 558-residue chain is Probable rhamnogalacturonase B (558 aa).

The N-terminal stretch at 1-21 is a signal peptide; the sequence is MLLDKLSVLSFLGLAPIFAAA. The cysteines at positions 42 and 68 are disulfide-linked. N-linked (GlcNAc...) asparagine glycosylation occurs at Asn145. Asp219 (proton donor) is an active-site residue. Residues Cys221 and Cys238 are joined by a disulfide bond. Asn239 and Asn254 each carry an N-linked (GlcNAc...) asparagine glycan. Residue His294 is part of the active site. N-linked (GlcNAc...) asparagine glycosylation occurs at Asn321. Disulfide bonds link Cys344/Cys350 and Cys372/Cys381. The segment covering 503 to 526 has biased composition (low complexity); it reads VGAQEGSTTSAPSFAAPSGAGNSP. Positions 503-558 are disordered; the sequence is VGAQEGSTTSAPSFAAPSGAGNSPQGPTGASGFGEKGQQGEQGEQGEQGEQGVCYV.

It belongs to the glycosyl hydrolase 28 family.

The protein resides in the secreted. The catalysed reaction is Endohydrolysis of alpha-D-GalA-(1-&gt;2)-alpha-L-Rha glycosidic bond in the rhamnogalacturonan I backbone with initial inversion of anomeric configuration releasing oligosaccharides with beta-D-GalA at the reducing end.. Functionally, pectinolytic enzymes consist of four classes of enzymes: pectine lyase, polygalacturonase, pectin methylesterase and rhamnogalacturonase. Hydrolyzes alpha-D-galacturonopyranosyl-(1,2)-alpha-L-rhamnopyranosyl linkages in the backbone of the hairy regions of pectins. This is Probable rhamnogalacturonase B (rhgB) from Aspergillus niger (strain ATCC MYA-4892 / CBS 513.88 / FGSC A1513).